A 123-amino-acid chain; its full sequence is Small ribosomal subunit protein uS12cz/uS12cy (123 aa).

Belongs to the universal ribosomal protein uS12 family. As to quaternary structure, part of the 30S ribosomal subunit.

Its subcellular location is the plastid. The protein localises to the chloroplast. Functionally, with S4 and S5 plays an important role in translational accuracy. Located at the interface of the 30S and 50S subunits. The chain is Small ribosomal subunit protein uS12cz/uS12cy (rps12-A) from Gossypium hirsutum (Upland cotton).